A 181-amino-acid polypeptide reads, in one-letter code: Peptidyl-tRNA hydrolase (181 aa).

TRNA is bound at residue Tyr14. Residue His19 is the Proton acceptor of the active site. Positions 62, 64, and 108 each coordinate tRNA.

The protein belongs to the PTH family. In terms of assembly, monomer.

Its subcellular location is the cytoplasm. The enzyme catalyses an N-acyl-L-alpha-aminoacyl-tRNA + H2O = an N-acyl-L-amino acid + a tRNA + H(+). Its function is as follows. Hydrolyzes ribosome-free peptidyl-tRNAs (with 1 or more amino acids incorporated), which drop off the ribosome during protein synthesis, or as a result of ribosome stalling. Catalyzes the release of premature peptidyl moieties from peptidyl-tRNA molecules trapped in stalled 50S ribosomal subunits, and thus maintains levels of free tRNAs and 50S ribosomes. The protein is Peptidyl-tRNA hydrolase of Campylobacter jejuni subsp. jejuni serotype O:23/36 (strain 81-176).